The sequence spans 76 residues: Peptide ARACIN 1 (76 aa).

An N-terminal signal peptide occupies residues 1–22 (MAMKTSHVLLLCLMFVIGFVEA). Positions 23 to 35 (RRSDTGPDISTPP) are cleaved as a propeptide — removed in mature form. A SxS motif essential for MIK2 binding motif is present at residues 36-38 (SGS). Positions 36–49 (SGSCGASIAEFNSS) match the SCOOP motif motif. Residues 56–76 (APPCRRPRLQNSEDVTHTTLP) are disordered. The span at 64–76 (LQNSEDVTHTTLP) shows a compositional bias: polar residues.

This sequence belongs to the serine rich endogenous peptide (SCOOP) phytocytokine family. In terms of assembly, interacts with MIK2 (via extracellular leucine-rich repeat domain); this interaction triggers the formation of complex between MIK2 and the BAK1/SERK3 and SERK4 coreceptors, and subsequent BAK1 activation by phosphorylation. Mainly expressed in young developing leaves, hydathodes, immature flowers and elongating pollen tubes.

The protein resides in the cell membrane. It is found in the secreted. The protein localises to the extracellular space. It localises to the apoplast. Its subcellular location is the endoplasmic reticulum. Brassicaceae-specific phytocytokine (plant endogenous peptide released into the apoplast) perceived by MIK2 in a BAK1/SERK3 and SERK4 coreceptors-dependent manner, that modulates various physiological and antimicrobial processes including growth prevention and reactive oxygen species (ROS) response regulation. Inhibits the fungal growth of Alternaria brassicicola, Sclerotinia sclerotiorum, Fusarium graminearum, yeast (Saccharomyces) and Botrytis cinerea, thus being an antimicrobial peptide (AMP). Promotes resistance to A.brassicicola and B.cinerea. The chain is Peptide ARACIN 1 from Arabidopsis thaliana (Mouse-ear cress).